A 334-amino-acid chain; its full sequence is Oligopeptide transport ATP-binding protein OppF (334 aa).

The ABC transporter domain maps to leucine 12–methionine 265. Glycine 57 to serine 64 contributes to the ATP binding site.

This sequence belongs to the ABC transporter superfamily. The complex is composed of two ATP-binding proteins (OppD and OppF), two transmembrane proteins (OppB and OppC) and a solute-binding protein (OppA).

It is found in the cell inner membrane. The catalysed reaction is a [peptide](out) + ATP + H2O = a [peptide](in) + ADP + phosphate + H(+). It carries out the reaction L-alanyl-gamma-D-glutamyl-meso-2,6-diaminopimelate(out) + ATP + H2O = L-alanyl-gamma-D-glutamyl-meso-2,6-diaminopimelate(in) + ADP + phosphate + H(+). Its function is as follows. Part of the ABC transporter complex OppABCDF involved in the uptake of oligopeptides, including the cell wall murein tripeptide L-alanyl-gamma-D-glutamyl-meso-diaminopimelate. Probably responsible for energy coupling to the transport system. Plays an important nutritional role and is involved in the recycling of cell wall peptides. The chain is Oligopeptide transport ATP-binding protein OppF from Salmonella typhimurium (strain LT2 / SGSC1412 / ATCC 700720).